A 177-amino-acid polypeptide reads, in one-letter code: Large ribosomal subunit protein uL6 (177 aa).

Belongs to the universal ribosomal protein uL6 family. As to quaternary structure, part of the 50S ribosomal subunit.

In terms of biological role, this protein binds to the 23S rRNA, and is important in its secondary structure. It is located near the subunit interface in the base of the L7/L12 stalk, and near the tRNA binding site of the peptidyltransferase center. The polypeptide is Large ribosomal subunit protein uL6 (Hydrogenovibrio crunogenus (strain DSM 25203 / XCL-2) (Thiomicrospira crunogena)).